Here is a 328-residue protein sequence, read N- to C-terminus: Alcohol-sensitive RING finger protein 1 (328 aa).

The RING-type 1; atypical zinc finger occupies 18–61 (CSICWESMPSGVGRLMPCGHEYHLACIRKWFHLHSGNRSCPVCR). The segment at 129–177 (CGICGEMNGDIDTCCNRCHHMYHHSCLGQLLVEVNAEREQGWSHCIFCY) adopts an RING-type 2; atypical zinc-finger fold.

The protein resides in the cytoplasm. It localises to the nucleus. Functionally, required for tolerance to alcohol. The chain is Alcohol-sensitive RING finger protein 1 (ASR1) from Eremothecium gossypii (strain ATCC 10895 / CBS 109.51 / FGSC 9923 / NRRL Y-1056) (Yeast).